The chain runs to 89 residues: Aminoacyl carrier protein 2 (89 aa).

Residues 6 to 84 (INVQNRVLSV…AMERMILNQL (79 aa)) enclose the Carrier domain. S42 carries the post-translational modification O-(pantetheine 4'-phosphoryl)serine.

4'-phosphopantetheine is transferred from CoA to a specific serine of the apo-form of this carrier protein.

Functionally, aminoacyl carrier protein. Can be charged with L-glycine via the formation of a thioester bond between the amino acid and the 4'-phosphopantetheinyl prosthetic group, catalyzed by the bll6282 ligase. The chain is Aminoacyl carrier protein 2 from Bradyrhizobium diazoefficiens (strain JCM 10833 / BCRC 13528 / IAM 13628 / NBRC 14792 / USDA 110).